Here is a 696-residue protein sequence, read N- to C-terminus: Elongation factor G (696 aa).

Positions 8–286 (EDVRNIGIAA…AVVAYLPAPT (279 aa)) constitute a tr-type G domain. GTP is bound by residues 17-24 (AHIDAGKT), 81-85 (DTPGH), and 135-138 (NKMD).

It belongs to the TRAFAC class translation factor GTPase superfamily. Classic translation factor GTPase family. EF-G/EF-2 subfamily.

It is found in the cytoplasm. Catalyzes the GTP-dependent ribosomal translocation step during translation elongation. During this step, the ribosome changes from the pre-translocational (PRE) to the post-translocational (POST) state as the newly formed A-site-bound peptidyl-tRNA and P-site-bound deacylated tRNA move to the P and E sites, respectively. Catalyzes the coordinated movement of the two tRNA molecules, the mRNA and conformational changes in the ribosome. In Sulfurimonas denitrificans (strain ATCC 33889 / DSM 1251) (Thiomicrospira denitrificans (strain ATCC 33889 / DSM 1251)), this protein is Elongation factor G.